A 1434-amino-acid chain; its full sequence is Ankyrin and armadillo repeat-containing protein (1434 aa).

The chain crosses the membrane as a helical span at residues 309 to 329 (IRRGIGYLKLICFLIPFLLSL). 5 ANK repeats span residues 532-561 (AGYTIFHHAALHNRVSIICQLCNANFKVNQ), 569-598 (QGPTPLHLAAQACSLETTVCLLCSKADYTL), 602-631 (RGWMPIHFAAFYDNVCIIIALCRKDPSLLE), 638-667 (NQCTPLLLAATSGALDTIQYLFSIGANWRK), and 671-701 (KGNNIIHLSVLTFHTEVLKYIIKLNIPELPV). 6 ARM repeats span residues 732–771 (DQYWRCILDAGTIPALINLLKSSKIKLQCKTVGLLSNIST), 773–812 (KSAVHALVEAGGIPSLINLLVCDEPEVHSRCAVILYDIAQ), 814–852 (ENKDVIAKYNGIPSLINLLNLNIENVLVNVMNCIRVLCI), 855–894 (ENNQRAVREHKGLPYLIRFLSSDSDVLKAVSSAAIAEVGR), 897–936 (KEIQDAIAMEGAIPPLVALFKGKQISVQMKGAMAVESLAS), and 1072–1112 (PVSQ…CIVL).

In terms of tissue distribution, ubiquitously expressed with highest level in pancreas and lowest in skeletal muscle.

The protein localises to the membrane. This is Ankyrin and armadillo repeat-containing protein (ANKAR) from Homo sapiens (Human).